A 168-amino-acid chain; its full sequence is Phosphopantetheine adenylyltransferase (168 aa).

Threonine 13 lines the substrate pocket. ATP contacts are provided by residues 13–14 (TF) and histidine 21. Residues lysine 45, leucine 78, and arginine 92 each contribute to the substrate site. ATP-binding positions include 93–95 (GLR), glutamate 103, and 128–134 (TQFISSS).

The protein belongs to the bacterial CoaD family. As to quaternary structure, homohexamer. The cofactor is Mg(2+).

It is found in the cytoplasm. It catalyses the reaction (R)-4'-phosphopantetheine + ATP + H(+) = 3'-dephospho-CoA + diphosphate. It participates in cofactor biosynthesis; coenzyme A biosynthesis; CoA from (R)-pantothenate: step 4/5. In terms of biological role, reversibly transfers an adenylyl group from ATP to 4'-phosphopantetheine, yielding dephospho-CoA (dPCoA) and pyrophosphate. In Wolbachia pipientis wMel, this protein is Phosphopantetheine adenylyltransferase.